We begin with the raw amino-acid sequence, 305 residues long: Acetyl-coenzyme A carboxylase carboxyl transferase subunit beta (305 aa).

The CoA carboxyltransferase N-terminal domain maps to 29–298 (LWTKCESCDA…EMKLPLLESS (270 aa)). Zn(2+) is bound by residues cysteine 33, cysteine 36, cysteine 52, and cysteine 55. The C4-type zinc finger occupies 33–55 (CESCDALTYTKDLQANLMVCLQC).

This sequence belongs to the AccD/PCCB family. In terms of assembly, acetyl-CoA carboxylase is a heterohexamer composed of biotin carboxyl carrier protein (AccB), biotin carboxylase (AccC) and two subunits each of ACCase subunit alpha (AccA) and ACCase subunit beta (AccD). Requires Zn(2+) as cofactor.

Its subcellular location is the cytoplasm. The enzyme catalyses N(6)-carboxybiotinyl-L-lysyl-[protein] + acetyl-CoA = N(6)-biotinyl-L-lysyl-[protein] + malonyl-CoA. It functions in the pathway lipid metabolism; malonyl-CoA biosynthesis; malonyl-CoA from acetyl-CoA: step 1/1. Its function is as follows. Component of the acetyl coenzyme A carboxylase (ACC) complex. Biotin carboxylase (BC) catalyzes the carboxylation of biotin on its carrier protein (BCCP) and then the CO(2) group is transferred by the transcarboxylase to acetyl-CoA to form malonyl-CoA. The chain is Acetyl-coenzyme A carboxylase carboxyl transferase subunit beta from Synechococcus sp. (strain ATCC 27144 / PCC 6301 / SAUG 1402/1) (Anacystis nidulans).